Here is a 350-residue protein sequence, read N- to C-terminus: Sodium/calcium exchanger MaX1 (350 aa).

Helical transmembrane passes span 4 to 24, 39 to 59, 69 to 89, 101 to 121, 125 to 145, 202 to 222, 242 to 264, 276 to 296, 302 to 322, and 330 to 350; these read VNFL…DYFV, FVIG…ASSI, IVIG…VGVA, MLKR…VFAF, LSML…FFLF, GGFA…VIGA, VIGT…VSAA, VIGS…LFYP, MSLF…LIFI, and RWEG…LFYI.

This sequence belongs to the Ca(2+):cation antiporter (CaCA) (TC 2.A.19) family.

It localises to the cell membrane. Its activity is regulated as follows. Calcium transport is inhibited by Na(+), K(+), Li(+), Mg(2+) or Mn(2+). Catalyzes Na(+)/Ca(2+) exchange. The transport is electrogenic with a likely stoichiometry of 3 or more Na(+) for each Ca(2+). Is K(+)-independent. This is Sodium/calcium exchanger MaX1 (maX1) from Methanosarcina acetivorans (strain ATCC 35395 / DSM 2834 / JCM 12185 / C2A).